Here is a 90-residue protein sequence, read N- to C-terminus: Phosphocarrier protein HPr (90 aa).

The region spanning 1-89 is the HPr domain; the sequence is MPAREITIIN…ELINNFFDEG (89 aa). The active-site Pros-phosphohistidine intermediate is the His-15.

This sequence belongs to the HPr family.

The protein localises to the cytoplasm. General (non sugar-specific) component of the phosphoenolpyruvate-dependent sugar phosphotransferase system (sugar PTS). This major carbohydrate active-transport system catalyzes the phosphorylation of incoming sugar substrates concomitantly with their translocation across the cell membrane. The phosphoryl group from phosphoenolpyruvate (PEP) is transferred to the phosphoryl carrier protein HPr by enzyme I. Phospho-HPr then transfers it to the PTS EIIA domain. This is Phosphocarrier protein HPr (ptsH) from Pseudomonas putida (Arthrobacter siderocapsulatus).